Reading from the N-terminus, the 216-residue chain is Pyrophosphatase PpaX (216 aa).

The active-site Nucleophile is aspartate 9.

It belongs to the HAD-like hydrolase superfamily. PpaX family. The cofactor is Mg(2+).

It catalyses the reaction diphosphate + H2O = 2 phosphate + H(+). Hydrolyzes pyrophosphate formed during P-Ser-HPr dephosphorylation by HPrK/P. Might play a role in controlling the intracellular pyrophosphate pool. This chain is Pyrophosphatase PpaX, found in Bacillus cereus (strain G9842).